A 202-amino-acid chain; its full sequence is FMN-dependent NADH:quinone oxidoreductase (202 aa).

Residues Ser-10, 16–18 (SAS), and 96–99 (MWNF) each bind FMN.

It belongs to the azoreductase type 1 family. As to quaternary structure, homodimer. FMN serves as cofactor.

The enzyme catalyses 2 a quinone + NADH + H(+) = 2 a 1,4-benzosemiquinone + NAD(+). The catalysed reaction is N,N-dimethyl-1,4-phenylenediamine + anthranilate + 2 NAD(+) = 2-(4-dimethylaminophenyl)diazenylbenzoate + 2 NADH + 2 H(+). Its function is as follows. Quinone reductase that provides resistance to thiol-specific stress caused by electrophilic quinones. In terms of biological role, also exhibits azoreductase activity. Catalyzes the reductive cleavage of the azo bond in aromatic azo compounds to the corresponding amines. In Beijerinckia indica subsp. indica (strain ATCC 9039 / DSM 1715 / NCIMB 8712), this protein is FMN-dependent NADH:quinone oxidoreductase.